The sequence spans 452 residues: Putative zinc metalloprotease VC_2253 (452 aa).

His22 is a binding site for Zn(2+). The active site involves Glu23. Residue His26 participates in Zn(2+) binding. A helical membrane pass occupies residues 98–120 (SAIVSAGPIFNFLFAIFAYWLVF). The PDZ domain maps to 197 to 292 (NLRDWNFDPE…QVELTLIPDS (96 aa)). 2 consecutive transmembrane segments (helical) span residues 378–400 (FVYF…LVPL) and 428–447 (MGYR…AIFN).

The protein belongs to the peptidase M50B family. Zn(2+) serves as cofactor.

It is found in the cell inner membrane. In Vibrio cholerae serotype O1 (strain ATCC 39315 / El Tor Inaba N16961), this protein is Putative zinc metalloprotease VC_2253.